The following is an 89-amino-acid chain: Probable oxaloacetate decarboxylase gamma chain (89 aa).

A helical membrane pass occupies residues 13-33; it reads LMLSGMGFVITFLLILIWAIT.

Belongs to the OadG family. In terms of assembly, heterotrimer of an alpha, a beta and a gamma subunit. Na(+) is required as a cofactor.

The protein resides in the cell membrane. It carries out the reaction oxaloacetate + 2 Na(+)(in) + H(+) = pyruvate + 2 Na(+)(out) + CO2. Catalyzes the decarboxylation of oxaloacetate coupled to Na(+) translocation. This chain is Probable oxaloacetate decarboxylase gamma chain, found in Actinobacillus succinogenes (strain ATCC 55618 / DSM 22257 / CCUG 43843 / 130Z).